Here is a 307-residue protein sequence, read N- to C-terminus: Elongation factor Ts (307 aa).

The segment at 80–83 is involved in Mg(2+) ion dislocation from EF-Tu; it reads TDFV.

The protein belongs to the EF-Ts family.

The protein localises to the cytoplasm. In terms of biological role, associates with the EF-Tu.GDP complex and induces the exchange of GDP to GTP. It remains bound to the aminoacyl-tRNA.EF-Tu.GTP complex up to the GTP hydrolysis stage on the ribosome. This is Elongation factor Ts from Clostridium botulinum (strain Kyoto / Type A2).